The sequence spans 363 residues: Chorismate synthase (363 aa).

Arginine 48 and arginine 54 together coordinate NADP(+). FMN-binding positions include 131 to 133 (RSS), 244 to 245 (NA), glycine 288, 303 to 307 (KPTSS), and arginine 329.

It belongs to the chorismate synthase family. Homotetramer. FMNH2 is required as a cofactor.

It catalyses the reaction 5-O-(1-carboxyvinyl)-3-phosphoshikimate = chorismate + phosphate. It participates in metabolic intermediate biosynthesis; chorismate biosynthesis; chorismate from D-erythrose 4-phosphate and phosphoenolpyruvate: step 7/7. Its function is as follows. Catalyzes the anti-1,4-elimination of the C-3 phosphate and the C-6 proR hydrogen from 5-enolpyruvylshikimate-3-phosphate (EPSP) to yield chorismate, which is the branch point compound that serves as the starting substrate for the three terminal pathways of aromatic amino acid biosynthesis. This reaction introduces a second double bond into the aromatic ring system. The sequence is that of Chorismate synthase from Maricaulis maris (strain MCS10) (Caulobacter maris).